The sequence spans 298 residues: Homoserine kinase (298 aa).

79-89 (PIARGLGSSGA) provides a ligand contact to ATP.

Belongs to the GHMP kinase family. Homoserine kinase subfamily.

The protein localises to the cytoplasm. It catalyses the reaction L-homoserine + ATP = O-phospho-L-homoserine + ADP + H(+). It participates in amino-acid biosynthesis; L-threonine biosynthesis; L-threonine from L-aspartate: step 4/5. Its function is as follows. Catalyzes the ATP-dependent phosphorylation of L-homoserine to L-homoserine phosphate. This chain is Homoserine kinase, found in Pyrobaculum islandicum (strain DSM 4184 / JCM 9189 / GEO3).